The chain runs to 449 residues: Probable glycine dehydrogenase (decarboxylating) subunit 1 (449 aa).

It belongs to the GcvP family. N-terminal subunit subfamily. In terms of assembly, the glycine cleavage system is composed of four proteins: P, T, L and H. In this organism, the P 'protein' is a heterodimer of two subunits.

The catalysed reaction is N(6)-[(R)-lipoyl]-L-lysyl-[glycine-cleavage complex H protein] + glycine + H(+) = N(6)-[(R)-S(8)-aminomethyldihydrolipoyl]-L-lysyl-[glycine-cleavage complex H protein] + CO2. In terms of biological role, the glycine cleavage system catalyzes the degradation of glycine. The P protein binds the alpha-amino group of glycine through its pyridoxal phosphate cofactor; CO(2) is released and the remaining methylamine moiety is then transferred to the lipoamide cofactor of the H protein. The polypeptide is Probable glycine dehydrogenase (decarboxylating) subunit 1 (Sulfurisphaera tokodaii (strain DSM 16993 / JCM 10545 / NBRC 100140 / 7) (Sulfolobus tokodaii)).